Consider the following 83-residue polypeptide: MDLQSLASSIPQDTLLVILAYALLGGLYLLVVPLALFFWMNSRWTRMGKIERLLVYGLVFLFFPGMVVFAPFLNFRLSGQGDN.

The next 2 membrane-spanning stretches (helical) occupy residues 18–38 (ILAY…ALFF) and 53–73 (LLVY…APFL).

This sequence belongs to the complex I NdhL subunit family. NDH-1 can be composed of about 15 different subunits; different subcomplexes with different compositions have been identified which probably have different functions.

It is found in the cellular thylakoid membrane. It catalyses the reaction a plastoquinone + NADH + (n+1) H(+)(in) = a plastoquinol + NAD(+) + n H(+)(out). The catalysed reaction is a plastoquinone + NADPH + (n+1) H(+)(in) = a plastoquinol + NADP(+) + n H(+)(out). Its function is as follows. NDH-1 shuttles electrons from an unknown electron donor, via FMN and iron-sulfur (Fe-S) centers, to quinones in the respiratory and/or the photosynthetic chain. The immediate electron acceptor for the enzyme in this species is believed to be plastoquinone. Couples the redox reaction to proton translocation, and thus conserves the redox energy in a proton gradient. Cyanobacterial NDH-1 also plays a role in inorganic carbon-concentration. The chain is NAD(P)H-quinone oxidoreductase subunit L from Parasynechococcus marenigrum (strain WH8102).